Consider the following 1133-residue polypeptide: Early transcription factor large subunit homolog (1133 aa).

A Helicase ATP-binding domain is found at 52 to 352 (KGGRAFFPCD…PNGQPLQRQQ (301 aa)). 99-106 (WQTGTGKS) serves as a coordination point for ATP. A DEAH box motif is present at residues 281-284 (DEIH). One can recognise a Helicase C-terminal domain in the interval 524–724 (MMKDILSIIR…EGDKALRKHA (201 aa)).

This sequence belongs to the DEAD box helicase family. DEAH subfamily.

It is found in the virion. The catalysed reaction is ATP + H2O = ADP + phosphate + H(+). Putative initation factor. This chain is Early transcription factor large subunit homolog, found in Ornithodoros (relapsing fever ticks).